Reading from the N-terminus, the 155-residue chain is Small ribosomal subunit protein uS7 (155 aa).

It belongs to the universal ribosomal protein uS7 family. Part of the 30S ribosomal subunit. Contacts proteins S9 and S11.

Functionally, one of the primary rRNA binding proteins, it binds directly to 16S rRNA where it nucleates assembly of the head domain of the 30S subunit. Is located at the subunit interface close to the decoding center, probably blocks exit of the E-site tRNA. In Chlorobium phaeovibrioides (strain DSM 265 / 1930) (Prosthecochloris vibrioformis (strain DSM 265)), this protein is Small ribosomal subunit protein uS7.